A 148-amino-acid polypeptide reads, in one-letter code: Protein NrdI (148 aa).

It belongs to the NrdI family.

Functionally, probably involved in ribonucleotide reductase function. The sequence is that of Protein NrdI from Mycolicibacterium gilvum (strain PYR-GCK) (Mycobacterium gilvum (strain PYR-GCK)).